Here is a 414-residue protein sequence, read N- to C-terminus: Na(+)-translocating NADH-quinone reductase subunit B (414 aa).

4 helical membrane-spanning segments follow: residues 23–40 (WFAL…PGLV), 56–76 (IMIM…YNAG), 129–149 (FLPI…LFCM), and 164–184 (ILFA…LGIT). FMN phosphoryl threonine is present on threonine 236. 5 helical membrane-spanning segments follow: residues 268-288 (IPGS…AMIV), 297-317 (IIAG…VIGS), 322-342 (MFSM…GMFF), 358-378 (WWYG…NPAY), and 381-401 (GMML…HLVV).

This sequence belongs to the NqrB/RnfD family. As to quaternary structure, composed of six subunits; NqrA, NqrB, NqrC, NqrD, NqrE and NqrF. The cofactor is FMN.

It localises to the cell inner membrane. It catalyses the reaction a ubiquinone + n Na(+)(in) + NADH + H(+) = a ubiquinol + n Na(+)(out) + NAD(+). Its function is as follows. NQR complex catalyzes the reduction of ubiquinone-1 to ubiquinol by two successive reactions, coupled with the transport of Na(+) ions from the cytoplasm to the periplasm. NqrA to NqrE are probably involved in the second step, the conversion of ubisemiquinone to ubiquinol. This chain is Na(+)-translocating NADH-quinone reductase subunit B, found in Vibrio vulnificus (strain CMCP6).